The primary structure comprises 160 residues: SsrA-binding protein (160 aa).

Belongs to the SmpB family.

The protein localises to the cytoplasm. Required for rescue of stalled ribosomes mediated by trans-translation. Binds to transfer-messenger RNA (tmRNA), required for stable association of tmRNA with ribosomes. tmRNA and SmpB together mimic tRNA shape, replacing the anticodon stem-loop with SmpB. tmRNA is encoded by the ssrA gene; the 2 termini fold to resemble tRNA(Ala) and it encodes a 'tag peptide', a short internal open reading frame. During trans-translation Ala-aminoacylated tmRNA acts like a tRNA, entering the A-site of stalled ribosomes, displacing the stalled mRNA. The ribosome then switches to translate the ORF on the tmRNA; the nascent peptide is terminated with the 'tag peptide' encoded by the tmRNA and targeted for degradation. The ribosome is freed to recommence translation, which seems to be the essential function of trans-translation. This chain is SsrA-binding protein, found in Pasteurella multocida (strain Pm70).